The following is a 400-amino-acid chain: Acetylornithine aminotransferase (400 aa).

Residues G102–A103 and F135 each bind pyridoxal 5'-phosphate. R138 is a binding site for N(2)-acetyl-L-ornithine. D220–Q223 is a pyridoxal 5'-phosphate binding site. N6-(pyridoxal phosphate)lysine is present on K249. S276 is a N(2)-acetyl-L-ornithine binding site. T277 serves as a coordination point for pyridoxal 5'-phosphate.

Belongs to the class-III pyridoxal-phosphate-dependent aminotransferase family. ArgD subfamily. As to quaternary structure, homodimer. Pyridoxal 5'-phosphate is required as a cofactor.

It localises to the cytoplasm. The catalysed reaction is N(2)-acetyl-L-ornithine + 2-oxoglutarate = N-acetyl-L-glutamate 5-semialdehyde + L-glutamate. It participates in amino-acid biosynthesis; L-arginine biosynthesis; N(2)-acetyl-L-ornithine from L-glutamate: step 4/4. This Gloeobacter violaceus (strain ATCC 29082 / PCC 7421) protein is Acetylornithine aminotransferase.